Reading from the N-terminus, the 596-residue chain is MMNDNKYIHIDSCVIEKHKIWDSLITKFGSHDLILQSAYIDSLIIWIPKERIIPIMEFLKQILAPHVMLYDLHGIDERLRMYRKELPEADFTVFYHIMSMSRNYDVILKVPLLENAMNVTTITSVFMNANWYERETWEMFGIHFDYHPNLTRIIMPKCWKGFPLRKEYPARATEFYPAFTLTRKKEDLAMDDLLFKPEEWGMHRNNKHEDFMFLNLGPNHPSVHGVFRIILQLSGEEIIDCVPDIGYHHRGAEKMGERQSWHSYIPYTDRVEYLGGCINEMPYVLAVEKLAGIVVPDRAKIIRIMLSELFRINSHLLYVSTYLQDVGVMTPVFLAFTDRQKIYDVIESITGARMHPAWFRIGGVADDLPLNWSDLLKQCLDWLPKRIAFYIDIALKNSIFKKRTCGIGSYGAKEALSWGVTGSGLRATGIEFDLRKSRPYSGYENFDFDIPIGNGLSDCYNRLVLKIEEMYQSIRILNQCLKNMPTGPVKSDHPLTTPPMKKYALKHIETLITHFLQVSWGPVIPPNESLQMVEATKGINSYYLISDGNTMSYRTRIRTPSFPHLQQIPSVIRGSLIPDLIAYLGSIDFVMSDVDR.

An NADH dehydrogenase I subunit C region spans residues 1–186 (MMNDNKYIHI…PAFTLTRKKE (186 aa)). Residues 210-596 (DFMFLNLGPN…IDFVMSDVDR (387 aa)) form an NADH dehydrogenase I subunit D region.

This sequence in the N-terminal section; belongs to the complex I 30 kDa subunit family. The protein in the C-terminal section; belongs to the complex I 49 kDa subunit family. In terms of assembly, NDH-1 is composed of 13 different subunits. Subunits NuoB, CD, E, F, and G constitute the peripheral sector of the complex.

Its subcellular location is the cell inner membrane. The enzyme catalyses a quinone + NADH + 5 H(+)(in) = a quinol + NAD(+) + 4 H(+)(out). Functionally, NDH-1 shuttles electrons from NADH, via FMN and iron-sulfur (Fe-S) centers, to quinones in the respiratory chain. The immediate electron acceptor for the enzyme in this species is believed to be ubiquinone. Couples the redox reaction to proton translocation (for every two electrons transferred, four hydrogen ions are translocated across the cytoplasmic membrane), and thus conserves the redox energy in a proton gradient. The sequence is that of NADH-quinone oxidoreductase subunit C/D from Blochmanniella floridana.